The chain runs to 1054 residues: NACHT, LRR and PYD domains-containing protein 12 (1054 aa).

Residues 1–95 (MLPSTARDGL…WERGQGEDLV (95 aa)) form the Pyrin domain. Residues 129–201 (YKDYVRRKFQ…SPIQMETLFE (73 aa)) form the FISNA domain. The region spanning 211–528 (HTVVLQGAAG…EFFAAMYCAL (318 aa)) is the NACHT domain. An ATP-binding site is contributed by 217–224 (GAAGMGKS). LRR repeat units lie at residues 821–841 (YLVE…KLLC), 850–871 (RLRT…DLAS), 878–899 (SLLE…LLCE), 907–928 (KLQT…GIAS), 935–955 (CLQE…QLLG), 964–985 (RLQK…DLSS), 992–1013 (TLHE…LLCK), and 1021–1042 (KLRV…RMAA).

This sequence belongs to the NLRP family. In terms of assembly, interacts (via pyrin domain) with ASC. Interacts (via pyrin domain) with FAF1 (via UBA domain). Interacts with MAP3K14; this interaction promotes proteasomal degradation of MAP3K14. Interacts with NOD2; this interaction promotes degradation of NOD2 through the ubiquitin-proteasome pathway. Interacts with HSPA1A and HSPA8. Interacts with HSP90AA1. Interacts with TRIM25; this interaction inhibits RIGI-mediated signaling pathway. In terms of tissue distribution, mainly expressed in dendritic cells (DCs) and neutrophils.

It is found in the cytoplasm. Functionally, plays an essential role as an potent mitigator of inflammation. Primarily expressed in dendritic cells and macrophages, inhibits both canonical and non-canonical NF-kappa-B and ERK activation pathways. Functions as a negative regulator of NOD2 by targeting it to degradation via the proteasome pathway. In turn, promotes bacterial tolerance. Also inhibits the RIGI-mediated immune signaling against RNA viruses by reducing the E3 ubiquitin ligase TRIM25-mediated 'Lys-63'-linked RIGI activation but enhancing the E3 ubiquitin ligase RNF125-mediated 'Lys-48'-linked RIGI degradation. Also acts as a negative regulator of inflammatory response to mitigate obesity and obesity-associated diseases in adipose tissue. In Mus musculus (Mouse), this protein is NACHT, LRR and PYD domains-containing protein 12 (Nlrp12).